A 456-amino-acid polypeptide reads, in one-letter code: uncharacterized protein (456 aa).

Residues 277-440 (IKNTKTIKQL…TKQLVRTTAK (164 aa)) form the YrdC-like domain.

This is an uncharacterized protein from Mycoplasma genitalium (strain ATCC 33530 / DSM 19775 / NCTC 10195 / G37) (Mycoplasmoides genitalium).